The following is a 468-amino-acid chain: Interleukin-9 receptor (468 aa).

Residues 1-37 (MALGRCIAEGWTLERVAVKQVSWFLIYSWVCSGVCRG) form the signal peptide. Residues 38–270 (VSVPEQGGGG…GLLVPRWQWS (233 aa)) are Extracellular-facing. Asn116 and Asn155 each carry an N-linked (GlcNAc...) asparagine glycan. In terms of domain architecture, Fibronectin type-III spans 148–256 (PPSDLQSNVS…WSQPVSFPSP (109 aa)). Positions 244–248 (WSEWS) match the WSXWS motif motif. A helical transmembrane segment spans residues 271–291 (ASILVVVPIFLLLTGFVHLLF). Topologically, residues 292–468 (KLSPRLKRIF…PVALPVSSRA (177 aa)) are cytoplasmic. The Box 1 motif motif lies at 301–309 (FYQNIPSPE). The disordered stretch occupies residues 407 to 426 (PQEDWAPLGSARPPPPDSDS).

It belongs to the type I cytokine receptor family. Type 4 subfamily. As to quaternary structure, interacts with IL9.

Its subcellular location is the cell membrane. It localises to the secreted. In terms of biological role, plays an important role in the immune response against parasites by acting as a receptor of IL9. The protein is Interleukin-9 receptor (Il9r) of Mus musculus (Mouse).